A 48-amino-acid polypeptide reads, in one-letter code: ATP synthase protein 8 (48 aa).

A helical membrane pass occupies residues 4–24 (LVPFFFVNQVVYAFVILTVLI).

It belongs to the ATPase protein 8 family. In terms of assembly, F-type ATPases have 2 components, CF(1) - the catalytic core - and CF(0) - the membrane proton channel.

Its subcellular location is the mitochondrion membrane. Its function is as follows. Mitochondrial membrane ATP synthase (F(1)F(0) ATP synthase or Complex V) produces ATP from ADP in the presence of a proton gradient across the membrane which is generated by electron transport complexes of the respiratory chain. F-type ATPases consist of two structural domains, F(1) - containing the extramembraneous catalytic core and F(0) - containing the membrane proton channel, linked together by a central stalk and a peripheral stalk. During catalysis, ATP synthesis in the catalytic domain of F(1) is coupled via a rotary mechanism of the central stalk subunits to proton translocation. Part of the complex F(0) domain. Minor subunit located with subunit a in the membrane. The polypeptide is ATP synthase protein 8 (atp8) (Aspergillus amstelodami).